The chain runs to 66 residues: uncharacterized protein (66 aa).

The segment at 1 to 20 (MIALAYLATVAIAAMVLAVA) is hydrophobic.

This is an uncharacterized protein from Streptomyces lividans.